The primary structure comprises 120 residues: Ribonuclease P protein component (120 aa).

It belongs to the RnpA family. Consists of a catalytic RNA component (M1 or rnpB) and a protein subunit.

It carries out the reaction Endonucleolytic cleavage of RNA, removing 5'-extranucleotides from tRNA precursor.. Functionally, RNaseP catalyzes the removal of the 5'-leader sequence from pre-tRNA to produce the mature 5'-terminus. It can also cleave other RNA substrates such as 4.5S RNA. The protein component plays an auxiliary but essential role in vivo by binding to the 5'-leader sequence and broadening the substrate specificity of the ribozyme. The chain is Ribonuclease P protein component from Bordetella avium (strain 197N).